Consider the following 102-residue polypeptide: Carboxysome shell protein CcmK2 (102 aa).

One can recognise a BMC domain in the interval 4 to 90; sequence AVGMIETRGF…PHENLEYVLP (87 aa).

It belongs to the bacterial microcompartments protein family. CcmK subfamily. Homohexamer. Stacked hexamers, with the concave faces together, have also been crystallized. Interacts preferentially with itself, then with CcmK1 and CcmK4a in vitro. May interact with CcmL, this occurs at very high CcmK2 concentrations. Interacts with CcmN and CcmO in the carboxysome.

Its subcellular location is the carboxysome. Probably the major shell protein of the carboxysome, a polyhedral inclusion where RuBisCO (ribulose bisphosphate carboxylase, rbcL-rbcS) is sequestered. Assembles into hexamers which make sheets that form the facets of the polyhedral carboxysome. The hexamer central pore probably regulates metabolite flux. In Thermosynechococcus vestitus (strain NIES-2133 / IAM M-273 / BP-1), this protein is Carboxysome shell protein CcmK2.